A 292-amino-acid polypeptide reads, in one-letter code: ATP synthase gamma chain (292 aa).

The protein belongs to the ATPase gamma chain family. F-type ATPases have 2 components, CF(1) - the catalytic core - and CF(0) - the membrane proton channel. CF(1) has five subunits: alpha(3), beta(3), gamma(1), delta(1), epsilon(1). CF(0) has three main subunits: a, b and c.

The protein localises to the cell membrane. Its function is as follows. Produces ATP from ADP in the presence of a proton gradient across the membrane. The gamma chain is believed to be important in regulating ATPase activity and the flow of protons through the CF(0) complex. This Streptococcus pneumoniae (strain JJA) protein is ATP synthase gamma chain.